The chain runs to 174 residues: Peroxisome assembly protein 22 (174 aa).

Residues 9–27 form a helical membrane-spanning segment; that stretch reads GYLAIIAAVSIGAAAYLWW.

The protein belongs to the peroxin-22 family.

It is found in the peroxisome membrane. Involved in peroxisome biogenesis. The sequence is that of Peroxisome assembly protein 22 (PEX22) from Candida glabrata (strain ATCC 2001 / BCRC 20586 / JCM 3761 / NBRC 0622 / NRRL Y-65 / CBS 138) (Yeast).